The sequence spans 28 residues: 14-3-3-like protein 4 (28 aa).

It belongs to the 14-3-3 family.

This chain is 14-3-3-like protein 4, found in Pseudotsuga menziesii (Douglas-fir).